Consider the following 258-residue polypeptide: Hydroxyacylglutathione hydrolase (258 aa).

Zn(2+) contacts are provided by His-52, His-54, Asp-56, His-57, His-109, Asp-126, and His-164.

This sequence belongs to the metallo-beta-lactamase superfamily. Glyoxalase II family. In terms of assembly, monomer. Zn(2+) is required as a cofactor.

It catalyses the reaction an S-(2-hydroxyacyl)glutathione + H2O = a 2-hydroxy carboxylate + glutathione + H(+). The protein operates within secondary metabolite metabolism; methylglyoxal degradation; (R)-lactate from methylglyoxal: step 2/2. Functionally, thiolesterase that catalyzes the hydrolysis of S-D-lactoyl-glutathione to form glutathione and D-lactic acid. This chain is Hydroxyacylglutathione hydrolase, found in Xylella fastidiosa (strain 9a5c).